The chain runs to 29 residues: M-poneritoxin-Ng3d (29 aa).

As to expression, expressed by the venom gland.

The protein localises to the secreted. Its function is as follows. Has activity against some Gram-positive bacteria and S.cerevisiae. Has a non-hemolytic activity. This Neoponera goeldii (Ponerine ant) protein is M-poneritoxin-Ng3d.